The chain runs to 389 residues: ATP phosphoribosyltransferase regulatory subunit (389 aa).

This sequence belongs to the class-II aminoacyl-tRNA synthetase family. HisZ subfamily. In terms of assembly, heteromultimer composed of HisG and HisZ subunits.

The protein localises to the cytoplasm. Its pathway is amino-acid biosynthesis; L-histidine biosynthesis; L-histidine from 5-phospho-alpha-D-ribose 1-diphosphate: step 1/9. Functionally, required for the first step of histidine biosynthesis. May allow the feedback regulation of ATP phosphoribosyltransferase activity by histidine. The chain is ATP phosphoribosyltransferase regulatory subunit from Hydrogenovibrio crunogenus (strain DSM 25203 / XCL-2) (Thiomicrospira crunogena).